The sequence spans 234 residues: Phosphoribosylaminoimidazole-succinocarboxamide synthase (234 aa).

It belongs to the SAICAR synthetase family.

It catalyses the reaction 5-amino-1-(5-phospho-D-ribosyl)imidazole-4-carboxylate + L-aspartate + ATP = (2S)-2-[5-amino-1-(5-phospho-beta-D-ribosyl)imidazole-4-carboxamido]succinate + ADP + phosphate + 2 H(+). Its pathway is purine metabolism; IMP biosynthesis via de novo pathway; 5-amino-1-(5-phospho-D-ribosyl)imidazole-4-carboxamide from 5-amino-1-(5-phospho-D-ribosyl)imidazole-4-carboxylate: step 1/2. This is Phosphoribosylaminoimidazole-succinocarboxamide synthase from Staphylococcus aureus (strain COL).